Here is a 267-residue protein sequence, read N- to C-terminus: Hydroxyacylglutathione hydrolase (267 aa).

Residues His-55, His-57, Asp-59, His-60, His-121, Asp-138, and His-176 each contribute to the Zn(2+) site.

It belongs to the metallo-beta-lactamase superfamily. Glyoxalase II family. In terms of assembly, monomer. Zn(2+) is required as a cofactor.

The catalysed reaction is an S-(2-hydroxyacyl)glutathione + H2O = a 2-hydroxy carboxylate + glutathione + H(+). It functions in the pathway secondary metabolite metabolism; methylglyoxal degradation; (R)-lactate from methylglyoxal: step 2/2. Functionally, thiolesterase that catalyzes the hydrolysis of S-D-lactoyl-glutathione to form glutathione and D-lactic acid. The protein is Hydroxyacylglutathione hydrolase of Shewanella oneidensis (strain ATCC 700550 / JCM 31522 / CIP 106686 / LMG 19005 / NCIMB 14063 / MR-1).